Reading from the N-terminus, the 140-residue chain is MISFNYEIDFEIREETSYINWVSSVILSENKSEGEINYIFCDDNYLLEINQQYLNHDTLTDVISFDYSLGDEIHGDIYISIERVRENADDFKVPFEEELKRVMIHGVLHYCGYKDKSDADELLMRSKEDEKLKLFHVKQN.

Zn(2+)-binding residues include His105, His109, and Asp115.

This sequence belongs to the endoribonuclease YbeY family. It depends on Zn(2+) as a cofactor.

It is found in the cytoplasm. Its function is as follows. Single strand-specific metallo-endoribonuclease involved in late-stage 70S ribosome quality control and in maturation of the 3' terminus of the 16S rRNA. This chain is Endoribonuclease YbeY, found in Flavobacterium psychrophilum (strain ATCC 49511 / DSM 21280 / CIP 103535 / JIP02/86).